A 460-amino-acid chain; its full sequence is Biphenyl 2,3-dioxygenase subunit alpha (460 aa).

A Rieske domain is found at 56–165 (WLLMGHETQI…VETYKGLIFA (110 aa)). [2Fe-2S] cluster contacts are provided by Cys-98, His-100, Cys-118, and His-121. 217-230 (QFCSDMYHAGTTSH) is a substrate binding site. Positions 224, 230, and 378 each coordinate Fe cation.

Belongs to the bacterial ring-hydroxylating dioxygenase alpha subunit family. In terms of assembly, heterohexamer consisting of three BphA1 subunits and three BphA2 subunits. The multicomponent biphenyl dioxygenase system is composed of a ferredoxin reductase (BphA4), a ferredoxin (BphA3), and a terminal oxygenase (BphA1A2). [2Fe-2S] cluster is required as a cofactor. Requires Fe cation as cofactor.

It catalyses the reaction biphenyl + NADH + O2 + H(+) = (2R,3S)-3-phenylcyclohexa-3,5-diene-1,2-diol + NAD(+). It functions in the pathway xenobiotic degradation; biphenyl degradation; 2-hydroxy-2,4-pentadienoate and benzoate from biphenyl: step 1/4. Functionally, part of the oxygenase component of the biphenyl dioxygenase system that catalyzes the stereospecific dihydroxylation of the aromatic ring of biphenyl, yielding a dihydrodiol compound. Is essential for biphenyl degradation and growth of Rhodococcus sp. strain RHA1 on biphenyl as the sole source of carbon and energy. Can also use naphtalene and 4-chlorobiphenyl (4-CB) as substrates, as well as some polychlorinated biphenyls (PCB) such as 2,2'-dichlorobiphenyl, 2,3-dichlorobiphenyl and 2,5,2'-trichlorobiphenyl. Exhibits weak activity toward dibenzofuran and dibenzo-p-dioxin. Electrons are transferred from NADH to the [2Fe-2S] cluster in BphA1 via FAD of BphA4 and [2Fe-2S] cluster of BphA3. The sequence is that of Biphenyl 2,3-dioxygenase subunit alpha from Rhodococcus jostii (strain RHA1).